The sequence spans 621 residues: Chaperone protein dnaK (621 aa).

The tract at residues 597–621 (VYSSTQQDNSKTEDGSVIDTNSKEA) is disordered.

Belongs to the heat shock protein 70 family.

Its subcellular location is the plastid. It localises to the chloroplast. Functionally, acts as a chaperone. In Gracilaria tenuistipitata var. liui (Red alga), this protein is Chaperone protein dnaK.